The following is a 307-amino-acid chain: Ribonuclease Z (307 aa).

Residues histidine 63, histidine 65, aspartate 67, histidine 68, histidine 141, aspartate 212, and histidine 270 each coordinate Zn(2+). Catalysis depends on aspartate 67, which acts as the Proton acceptor.

It belongs to the RNase Z family. In terms of assembly, homodimer. The cofactor is Zn(2+).

The catalysed reaction is Endonucleolytic cleavage of RNA, removing extra 3' nucleotides from tRNA precursor, generating 3' termini of tRNAs. A 3'-hydroxy group is left at the tRNA terminus and a 5'-phosphoryl group is left at the trailer molecule.. Its function is as follows. Zinc phosphodiesterase, which displays some tRNA 3'-processing endonuclease activity. Probably involved in tRNA maturation, by removing a 3'-trailer from precursor tRNA. This chain is Ribonuclease Z, found in Bacillus anthracis (strain A0248).